Here is a 107-residue protein sequence, read N- to C-terminus: Ferredoxin CarAc (107 aa).

In terms of domain architecture, Rieske spans 6–102 (LKVCAASDMQ…VEVKEGEVYV (97 aa)). 4 residues coordinate [2Fe-2S] cluster: C46, H48, C65, and H68.

In terms of assembly, monomer. Carbazole 1,9a-dioxygenase complex consists of a terminal oxygenase component CarAa, a ferredoxin reductase component CarAd and a ferredoxin component CarAc. [2Fe-2S] cluster serves as cofactor.

Its function is as follows. Part of the multicomponent carbazole 1,9a-dioxygenase (CARDO), that converts carbazole (CAR) into 2-aminobiphenyl-2,3-diol. Acts as a mediator in the electron transfer from CarAd to CarAa. This is Ferredoxin CarAc (carAc) from Metapseudomonas resinovorans (Pseudomonas resinovorans).